The primary structure comprises 292 residues: Cyclin-dependent-like kinase 5 (292 aa).

Residues 4-286 form the Protein kinase domain; that stretch reads YDKMEKIGEG…ADAALRHAYF (283 aa). Residues 10–18 and K33 each bind ATP; that span reads IGEGTYGTV. D126 serves as the catalytic Proton acceptor. Mg(2+) contacts are provided by N131 and D144.

This sequence belongs to the protein kinase superfamily. CMGC Ser/Thr protein kinase family. CDC2/CDKX subfamily. In terms of assembly, heterodimer composed of a catalytic subunit cdk-5 and a regulatory subunit cdka-1. Interaction with cdka-1 is required for cdk-5 activation. Requires Mg(2+) as cofactor.

It is found in the cytoplasm. The protein localises to the cell projection. Its subcellular location is the dendrite. The enzyme catalyses L-seryl-[protein] + ATP = O-phospho-L-seryl-[protein] + ADP + H(+). It carries out the reaction L-threonyl-[protein] + ATP = O-phospho-L-threonyl-[protein] + ADP + H(+). Its function is as follows. Proline-directed serine/threonine-protein kinase which, in several motor neurons, promotes the polarized trafficking of synaptic vesicles and dense-core vesicles (DCV). In the ventral nerve cord, phosphorylates lin-10 and thereby prevents lin-10-mediated anterograde trafficking of the glutamate receptor glr-1. Involved in the inhibition of glr-1 trafficking in hypoxic conditions. In DA motor neurons but not in DB motor neurons, regulates axonal transport of synaptic vesicle precursors by inhibiting dynein-mediated retrograde transport. Regulates the trafficking of dense-core vesicles in DA and DB motor neurons by promoting anterograde trafficking to the axon and preventing dynein-dependent trafficking to the dendrite. May regulate these processes in association with cdka-1/p35. Activity may be regulated by cyy-1. Involved in synapse formation during DD motor neuron remodeling by regulating transport of disassembled synaptic material to the new synaptic sites probably by activating the motor protein unc-104/kinesin-3. Regulates microtubule polarity in the dendrite of DB motor neurons. May also play a role in GABAergic synaptic vesicle localization in the ventral nerve cord. This Caenorhabditis elegans protein is Cyclin-dependent-like kinase 5.